The chain runs to 851 residues: Phosphatidate phosphatase LPIN3 (851 aa).

Residues 1 to 108 (MNYVGQLAET…VPPGLCTSPI (108 aa)) form an N-LIP region. Disordered stretches follow at residues 114–385 (SGFP…YLDD) and 400–432 (QSDSGLGARRWSEPSSQKSLRDPNPEHEPEPTL). Basic residues predominate over residues 140 to 151 (GRRKRRRRRKPK). The short motif at 141–148 (RRKRRRRR) is the Nuclear localization signal element. Residue T159 is modified to Phosphothreonine. A phosphoserine mark is found at S161, S162, and S224. The span at 268–286 (GRAGATSPPRGGPSTPSTS) shows a compositional bias: low complexity. The span at 418–429 (SLRDPNPEHEPE) shows a compositional bias: basic and acidic residues. At S463 the chain carries Phosphoserine. Residues 542–559 (SAQKEKTAAKEQQGEKTE) are compositionally biased toward basic and acidic residues. The segment at 542–591 (SAQKEKTAAKEQQGEKTEVLSSDDDAPDSPVILEIPSLPPSTPPSTPTYK) is disordered. Residues 578–587 (SLPPSTPPST) are compositionally biased toward pro residues. The tract at residues 590-792 (YKKSLRLSSD…RIFTVNPRGE (203 aa)) is C-LIP. Positions 644–648 (DIDGT) match the DXDXT motif motif. Residues 655 to 659 (LGHIL) carry the LXXIL motif motif.

It belongs to the lipin family. Mg(2+) is required as a cofactor. In terms of tissue distribution, significant expression in intestine and other regions of the gastrointestinal tract.

It is found in the nucleus. The catalysed reaction is a 1,2-diacyl-sn-glycero-3-phosphate + H2O = a 1,2-diacyl-sn-glycerol + phosphate. With respect to regulation, inhibited by N-ethylmaleimide. Magnesium-dependent phosphatidate phosphatase enzyme which catalyzes the conversion of phosphatidic acid to diacylglycerol during triglyceride, phosphatidylcholine and phosphatidylethanolamine biosynthesis therefore regulates fatty acid metabolism. The chain is Phosphatidate phosphatase LPIN3 from Homo sapiens (Human).